Reading from the N-terminus, the 403-residue chain is Protein IQ-DOMAIN 23 (403 aa).

A disordered region spans residues 1–43; that stretch reads MGFFGRLFGSKKKSDKAASSRDKRRWSFTTRSSNSSKRAPAVT. The Nuclear localization signal motif lies at 10-17; that stretch reads SKKKSDKA. Over residues 27–43 the composition is skewed to polar residues; the sequence is SFTTRSSNSSKRAPAVT. The tract at residues 115-133 is calmodulin-binding; sequence QENIAAMKIQSAFRGYLAR. 2 IQ domains span residues 116 to 144 and 145 to 167; these read ENIA…ALVK and LQAL…RMQT. Disordered regions lie at residues 176-208, 242-301, and 381-403; these read RARA…RSLH, ILEV…PTSR, and GGDS…SFLV. Residues 257 to 267 show a composition bias toward basic and acidic residues; that stretch reads LRSERNNESPR.

The protein belongs to the IQD family. As to quaternary structure, binds to multiple calmodulin (CaM) in the presence of Ca(2+) and CaM-like proteins.

The protein resides in the nucleus. The protein localises to the nucleolus. It is found in the cytoplasm. It localises to the cytoskeleton. Its subcellular location is the cell membrane. Functionally, may be involved in cooperative interactions with calmodulins or calmodulin-like proteins. Recruits calmodulin proteins to microtubules, thus being a potential scaffold in cellular signaling and trafficking. May associate with nucleic acids and regulate gene expression at the transcriptional or post-transcriptional level. This chain is Protein IQ-DOMAIN 23, found in Arabidopsis thaliana (Mouse-ear cress).